The primary structure comprises 775 residues: Homeobox protein SIX4 (775 aa).

The segment covering 1–10 (MSSSSPTGQI) has biased composition (polar residues). 2 disordered regions span residues 1 to 76 (MSSS…AGAA) and 263 to 313 (WFKN…DGVT). Residue S2 is modified to N-acetylserine. Positions 54–63 (EPGDAAAASR) are enriched in low complexity. Residues 216 to 275 (GEETVYCFKEKSRNALKELYKQNRYPSPAEKRHLAKITGLSLTQVSNWFKNRRQRDRNPS) constitute a DNA-binding region (homeobox). 2 stretches are compositionally biased toward basic and acidic residues: residues 271 to 283 (DRNPSETQSKSES) and 292 to 301 (ESSKGHEDLS). A transactivation domain region spans residues 582–775 (AQVNASLSSE…VQLDEDMQDL (194 aa)). S634 bears the Phosphoserine mark.

The protein belongs to the SIX/Sine oculis homeobox family. As to quaternary structure, interacts with EYA3; acts cooperatively with EYA3 to transactivate target genes through interaction and nuclear translocation of EYA3 protein. As to expression, mainly expressed in the skeletal muscle (isoform 1 and isoform 2 but not isoform 3), and weakly in the heart. Also found in the retina and the distal tube of kidney. Expressed in skeletal muscle, nasal epithelium, cochlea, parathyroid and salivary gland. Expressed in muscle satellite cells of normal and regenerating muscles.

It localises to the nucleus. Its subcellular location is the cytoplasm. Transcriptional regulator which can act as both a transcriptional repressor and activator by binding a DNA sequence on these target genes and is involved in processes like cell differentiation, cell migration and cell survival. Transactivates gene expression by binding a 5'-[CAT]A[CT][CT][CTG]GA[GAT]-3' motif present in the Trex site and from a 5'-TCA[AG][AG]TTNC-3' motif present in the MEF3 site of the muscle-specific genes enhancer. Acts cooperatively with EYA proteins to transactivate their target genes through interaction and nuclear translocation of EYA protein. Acts synergistically with SIX1 to regulate target genes involved in formation of various organs, including muscle, kidney, gonad, ganglia, olfactory epithelium and cranial skeleton. Plays a role in several important steps of muscle development. Controls the genesis of hypaxial myogenic progenitors in the dermomyotome by transactivating PAX3 and the delamination and migration of the hypaxial precursors from the ventral lip to the limb buds through the transactivation of PAX3, MET and LBX1. Controls myoblast determination by transactivating MYF5, MYOD1 and MYF6. Controls somitic differentiation in myocyte through MYOG transactivation. Plays a role in synaptogenesis and sarcomere organization by participating in myofiber specialization during embryogenesis by activating fast muscle program in the primary myotome resulting in an up-regulation of fast muscle genes, including ATP2A1, MYL1 and TNNT3. Simultaneously, is also able to activate inhibitors of slow muscle genes, such as SOX6, HRASLS, and HDAC4, thereby restricting the activation of the slow muscle genes. During muscle regeneration, negatively regulates differentiation of muscle satellite cells through down-regulation of MYOG expression. During kidney development regulates the early stages of metanephros development and ureteric bud formation through regulation of GDNF, SALL1, PAX8 and PAX2 expression. Plays a role in gonad development by regulating both testis determination and size determination. In gonadal sex determination, transactivates ZFPM2 by binding a MEF3 consensus sequence, resulting in SRY up-regulation. In gonadal size determination, transactivates NR5A1 by binding a MEF3 consensus sequence resulting in gonadal precursor cell formation regulation. During olfactory development mediates the specification and patterning of olfactory placode through fibroblast growth factor and BMP4 signaling pathways and also regulates epithelial cell proliferation during placode formation. Promotes survival of sensory neurons during early trigeminal gangliogenesis. In the developing dorsal root ganglia, up-regulates SLC12A2 transcription. Regulates early thymus/parathyroid organogenesis through regulation of GCM2 and FOXN1 expression. Forms gustatory papillae during development of the tongue. Also plays a role during embryonic cranial skeleton morphogenesis. The chain is Homeobox protein SIX4 (Six4) from Mus musculus (Mouse).